Here is a 397-residue protein sequence, read N- to C-terminus: CCA-adding enzyme (397 aa).

Positions 27 and 30 each coordinate ATP. The CTP site is built by Gly-27 and Arg-30. Asp-40 and Asp-42 together coordinate Mg(2+). ATP is bound by residues Arg-111, Asp-154, Arg-157, Arg-160, and Arg-163. CTP contacts are provided by Arg-111, Asp-154, Arg-157, Arg-160, and Arg-163.

It belongs to the tRNA nucleotidyltransferase/poly(A) polymerase family. Bacterial CCA-adding enzyme type 3 subfamily. As to quaternary structure, homodimer. Mg(2+) serves as cofactor.

The enzyme catalyses a tRNA precursor + 2 CTP + ATP = a tRNA with a 3' CCA end + 3 diphosphate. It catalyses the reaction a tRNA with a 3' CCA end + 2 CTP + ATP = a tRNA with a 3' CCACCA end + 3 diphosphate. Functionally, catalyzes the addition and repair of the essential 3'-terminal CCA sequence in tRNAs without using a nucleic acid template. Adds these three nucleotides in the order of C, C, and A to the tRNA nucleotide-73, using CTP and ATP as substrates and producing inorganic pyrophosphate. tRNA 3'-terminal CCA addition is required both for tRNA processing and repair. Also involved in tRNA surveillance by mediating tandem CCA addition to generate a CCACCA at the 3' terminus of unstable tRNAs. While stable tRNAs receive only 3'-terminal CCA, unstable tRNAs are marked with CCACCA and rapidly degraded. The polypeptide is CCA-adding enzyme (Bacillus licheniformis (strain ATCC 14580 / DSM 13 / JCM 2505 / CCUG 7422 / NBRC 12200 / NCIMB 9375 / NCTC 10341 / NRRL NRS-1264 / Gibson 46)).